A 153-amino-acid chain; its full sequence is Histone H2B.10 (153 aa).

Composition is skewed to basic and acidic residues over residues 1 to 28 and 36 to 53; these read MAPK…EKAP and EKRL…EGKK. Residues 1–61 form a disordered region; sequence MAPKAEKKPA…KKAGRKKAKK (61 aa). Lysine 7 and lysine 37 each carry N6-acetyllysine. Lysine 149 participates in a covalent cross-link: Glycyl lysine isopeptide (Lys-Gly) (interchain with G-Cter in ubiquitin).

This sequence belongs to the histone H2B family. As to quaternary structure, the nucleosome is a histone octamer containing two molecules each of H2A, H2B, H3 and H4 assembled in one H3-H4 heterotetramer and two H2A-H2B heterodimers. The octamer wraps approximately 147 bp of DNA. In terms of processing, can be acetylated to form H2BK6ac and H2BK33ac. Post-translationally, monoubiquitinated by BRE1 to form H2BK143ub1 and deubiquitinated by UBP26. Required for heterochromatic histone H3 di- and trimethylation at H3K4me. May give a specific tag for epigenetic transcriptional activation.

The protein localises to the nucleus. It is found in the chromosome. Functionally, core component of nucleosome. Nucleosomes wrap and compact DNA into chromatin, limiting DNA accessibility to the cellular machineries which require DNA as a template. Histones thereby play a central role in transcription regulation, DNA repair, DNA replication and chromosomal stability. DNA accessibility is regulated via a complex set of post-translational modifications of histones, also called histone code, and nucleosome remodeling. This is Histone H2B.10 (H2B.10) from Oryza sativa subsp. indica (Rice).